The chain runs to 399 residues: Ankyrin repeat domain-containing protein 65 (399 aa).

ANK repeat units follow at residues 40–69 (QGWG…SVEE), 73–102 (AGRT…PVGA), 106–135 (AGRT…SAAA), 139–168 (TGLT…PGPA), 176–205 (RGWT…GLDG), 207–231 (LLVA…RVDA), 235–264 (AGAT…DPGI), 268–297 (HGRS…EVDA), 301–330 (LGLT…QVDA), and 334–363 (LRKT…SPTL). The interval 377–399 (DLPQALPELGGGEKECEGIESTG) is disordered.

The chain is Ankyrin repeat domain-containing protein 65 (ANKRD65) from Homo sapiens (Human).